We begin with the raw amino-acid sequence, 669 residues long: Sodium-dependent phosphate transporter (669 aa).

Over 1–6 (MVTGPD) the chain is Extracellular. A helical membrane pass occupies residues 7–27 (MLWLVITSGIACFFMAFVTGA). Residues 28 to 47 (NDIANTFSTSIGSKAISIKK) lie on the Cytoplasmic side of the membrane. A helical transmembrane segment spans residues 48–68 (ALIVAFFFEALGASLLGGTVT). Residues 69–86 (DSIRSKIINFQVFYDTPE) are Extracellular-facing. A helical membrane pass occupies residues 87–107 (FLMLGMCCALMGATVWLAVAT). Position 108 (Arg108) is a topological domain, cytoplasmic. The helical transmembrane segment at 109-129 (AGLPVSTTHSIIGALLGFGLA) threads the bilayer. The Extracellular segment spans residues 130 to 143 (TGNMKSIKWEKINN). Residues 144-164 (IVISWLAAPILAGTCSAIAFT) form a helical membrane-spanning segment. The Cytoplasmic segment spans residues 165–186 (VLRMLILRKKNSFEIIKKMYWF). The helical transmembrane segment at 187 to 207 (LIFLITLPFSVFLIFHNPIVI) threads the bilayer. Over 208–239 (NTQCKMKKDGKVIVSSPCYIEDWSAAHSFYAS) the chain is Extracellular. The helical transmembrane segment at 240-260 (IICILLSSLLTAIGSFVIYII) threads the bilayer. Residues 261 to 502 (YNKRINNYNL…YNNGIRGKIK (242 aa)) lie on the Cytoplasmic side of the membrane. The segment covering 311–335 (AHNNTSNGTKQNQVGNGTKSNNNNV) has biased composition (polar residues). 2 disordered regions span residues 311-364 (AHNN…SVEA) and 392-444 (TNMN…KNME). Positions 342–352 (KNVKSQQDDSK) are enriched in basic and acidic residues. Residues 395–433 (NENNNNSNKNNNSNKNNNSNKNNNSNKNNNSNNGNSNEG) show a composition bias toward low complexity. A helical membrane pass occupies residues 503–523 (VQWYILLFGGLSMSLGLSIMG). Residues 524 to 542 (YRVIKTVGMKLIKITPARG) lie on the Extracellular side of the membrane. The chain crosses the membrane as a helical span at residues 543–563 (FTIELISGLVVLFFSICGIPL). The Cytoplasmic segment spans residues 564–632 (SSTHCAVSSV…TSCVNLRLFR (69 aa)). The chain crosses the membrane as a helical span at residues 633–653 (TVFLSWILTVVFSATVTAGIY). Topologically, residues 654-669 (SFAAYSPSYIMKMQTV) are extracellular.

The protein belongs to the inorganic phosphate transporter (PiT) (TC 2.A.20) family.

The protein resides in the cell membrane. The enzyme catalyses 2 Na(+)(out) + phosphate(out) = 2 Na(+)(in) + phosphate(in). Sodium-phosphate symporter which preferentially transports the monovalent form of phosphate with a stoichiometry of two sodium ions per phosphate ion. The protein is Sodium-dependent phosphate transporter of Plasmodium falciparum.